A 167-amino-acid polypeptide reads, in one-letter code: uncharacterized protein (167 aa).

A disordered region spans residues 148-167; the sequence is NKESRGENDGGEERESANIY.

This is an uncharacterized protein from Homo sapiens (Human).